A 240-amino-acid polypeptide reads, in one-letter code: Uridylate kinase (240 aa).

12–15 (KLSG) provides a ligand contact to ATP. The interval 20 to 25 (GEQGNG) is involved in allosteric activation by GTP. G54 serves as a coordination point for UMP. The ATP site is built by G55 and R59. UMP-binding positions include D74 and 135 to 142 (TGNPYFST). Positions 163, 169, and 172 each coordinate ATP.

Belongs to the UMP kinase family. Homohexamer. Interacts with BrxC.

Its subcellular location is the cytoplasm. The enzyme catalyses UMP + ATP = UDP + ADP. It functions in the pathway pyrimidine metabolism; CTP biosynthesis via de novo pathway; UDP from UMP (UMPK route): step 1/1. Its activity is regulated as follows. Allosterically activated by GTP. Can also be activated by dGTP and 3'-anthraniloyl-2'-deoxyguanosine-5'-triphosphate (Ant-dGTP). Inhibited by UTP, 5-bromo-UTP and 5-iodo-UTP. In terms of biological role, catalyzes the reversible phosphorylation of UMP to UDP, with ATP or dATP as the most efficient phosphate donors. Is also able to phosphorylate 5-fluoro-UMP and 6-aza-UMP. The sequence is that of Uridylate kinase (pyrH) from Bacillus subtilis (strain 168).